The sequence spans 312 residues: MIPTFRIQIRRYLNTEVKRRLYAQCLNRDFDSLLAEVKGIPVSEMEESFVTLYLMKSAQFGHVPSLDYLWHKYVMRHHMIMVNPSLLCDIGNIALQEGKLFIPEQLSSHFMKFYGSNNEYEQYRYELLRIQVESFAKGTMEKTSFREKWKVFLQDLDHTVERDFQFSVRDFPHLTQALSGTDRELLLKMLFSEGKISVCNNSSLPMLLNMILLQEEFELEFKIKLFQNFYTIHRHLNYEDTVTILFKNCKGNGYRSIELMEFVRGNKITTPHLAYKYFLQSIIDSEYYFKAYDYMDLVKKYDGLLEQLRQQE.

The transit peptide at 1–12 (MIPTFRIQIRRY) directs the protein to the mitochondrion.

Its subcellular location is the mitochondrion inner membrane. Required for expression of the mitochondrial gene for cytochrome c oxidase subunit 3 (COX3). PET122 seems to work by directly interacting with the small ribosomal subunit to promote translation initiation on the COX3 mRNA. The chain is Protein PET122, mitochondrial (PET122) from Lachancea kluyveri (strain ATCC 58438 / CBS 3082 / BCRC 21498 / NBRC 1685 / JCM 7257 / NCYC 543 / NRRL Y-12651) (Yeast).